Consider the following 337-residue polypeptide: Na(+)/H(+) exchange regulatory cofactor NHE-RF2 (337 aa).

Residues 11-91 (LCRLVRGEQG…QTQLLVVDKE (81 aa)) form the PDZ 1 domain. The disordered stretch occupies residues 112–145 (LPPAHNPWEPKPDWACSGSLGSDTGQKDVNGPPR). Phosphoserine occurs at positions 130, 183, 186, 254, 269, 280, and 303. Residues 151–231 (LCHLRRGPQG…EARLLVVDPE (81 aa)) form the PDZ 2 domain. The segment at 242–337 (VPTEEHVEGP…NRKREIFSNF (96 aa)) is disordered. Residues 255-275 (PVTNGTSPAQLNGGSVCSSRS) show a composition bias toward polar residues. The span at 327 to 337 (WNRKREIFSNF) shows a compositional bias: basic and acidic residues.

As to quaternary structure, homodimer, and heterodimer with NHERF1. Binds PDZK1. Interacts with SRY. Binds ADRB2, SLC9A3, P2RY1, P2YR2, RDX and LPAR2. Interacts with MCC. Found in a complex with EZR, PODXL and NHERF2. Interacts (via the PDZ domains) with PODXL (via the C-terminal PDZ-binding motif DTHL); interaction is detected in glomerular epithelium cells. Interacts with SGK1 and KCNJ1/ROMK1. Interacts (via the PDZ domains) with SLC26A6.

It is found in the endomembrane system. Its subcellular location is the nucleus. The protein localises to the apical cell membrane. Functionally, scaffold protein that connects plasma membrane proteins with members of the ezrin/moesin/radixin family and thereby helps to link them to the actin cytoskeleton and to regulate their surface expression. Necessary for cAMP-mediated phosphorylation and inhibition of SLC9A3. May also act as scaffold protein in the nucleus. The protein is Na(+)/H(+) exchange regulatory cofactor NHE-RF2 (Nherf2) of Mus musculus (Mouse).